The sequence spans 1454 residues: Coiled-coil domain-containing protein 18 (1454 aa).

Position 45 is a phosphoserine (Ser-45). Coiled coils occupy residues 107–138 (APVD…HSLM), 170–402 (ILEE…ISQL), 438–464 (KLVI…NLTA), and 508–1309 (TMNK…SGHE). The tract at residues 828–851 (QKQRESSAEKLRKMEEKCESAAHE) is disordered. Phosphoserine is present on Ser-1355.

It localises to the cytoplasm. The protein resides in the cytoskeleton. It is found in the microtubule organizing center. The protein localises to the centrosome. Its subcellular location is the centriolar satellite. The chain is Coiled-coil domain-containing protein 18 (CCDC18) from Homo sapiens (Human).